The sequence spans 343 residues: Putative trace amine-associated receptor 3 (343 aa).

Over Met1–Val35 the chain is Extracellular. A helical membrane pass occupies residues Phe36–Ile56. The Cytoplasmic portion of the chain corresponds to Ser57–Phe68. A helical membrane pass occupies residues Leu69 to Ile89. Residues Met90–Gln150 are Extracellular-facing. Cys104 and Cys189 are oxidised to a cystine. A glycan (N-linked (GlcNAc...) asparagine) is linked at Asn145. Residues Leu151–Leu168 form a helical membrane-spanning segment. Topologically, residues Ser169–Asp172 are cytoplasmic. Residues Val173–Phe186 are extracellular Loop 2 (ECL2). A helical transmembrane segment spans residues Val173–Phe193. Topologically, residues Asn194–Gly198 are extracellular. Residues Thr199–Val223 form a helical membrane-spanning segment. Topologically, residues Ser224–Thr257 are cytoplasmic. A helical membrane pass occupies residues Leu258–Ile278. Over Asp279–Pro287 the chain is Extracellular. The helical transmembrane segment at Ile288–Ile308 threads the bilayer. The Cytoplasmic segment spans residues His309 to His343.

The protein belongs to the G-protein coupled receptor 1 family. As to expression, not expressed in the pons, thalamus, globus pallidus, caudate, putamen or cerebellum.

It localises to the cell membrane. Functionally, putative olfactory receptor activated by several primary trace amines. The chain is Putative trace amine-associated receptor 3 from Homo sapiens (Human).